The primary structure comprises 365 residues: Phosphoserine aminotransferase (365 aa).

R46 is a binding site for L-glutamate. Residues 80–81 (AT), W106, T157, D177, and Q200 contribute to the pyridoxal 5'-phosphate site. Residue K201 is modified to N6-(pyridoxal phosphate)lysine. 242–243 (NT) provides a ligand contact to pyridoxal 5'-phosphate.

It belongs to the class-V pyridoxal-phosphate-dependent aminotransferase family. SerC subfamily. Homodimer. Pyridoxal 5'-phosphate is required as a cofactor.

The protein localises to the cytoplasm. It carries out the reaction O-phospho-L-serine + 2-oxoglutarate = 3-phosphooxypyruvate + L-glutamate. The enzyme catalyses 4-(phosphooxy)-L-threonine + 2-oxoglutarate = (R)-3-hydroxy-2-oxo-4-phosphooxybutanoate + L-glutamate. It functions in the pathway amino-acid biosynthesis; L-serine biosynthesis; L-serine from 3-phospho-D-glycerate: step 2/3. The protein operates within cofactor biosynthesis; pyridoxine 5'-phosphate biosynthesis; pyridoxine 5'-phosphate from D-erythrose 4-phosphate: step 3/5. Catalyzes the reversible conversion of 3-phosphohydroxypyruvate to phosphoserine and of 3-hydroxy-2-oxo-4-phosphonooxybutanoate to phosphohydroxythreonine. The polypeptide is Phosphoserine aminotransferase (Leptospira biflexa serovar Patoc (strain Patoc 1 / Ames)).